Reading from the N-terminus, the 198-residue chain is Na(+)-translocating NADH-quinone reductase subunit E (198 aa).

The next 6 helical transmembrane spans lie at 11–31 (SIFI…FLAV), 39–59 (FGLG…NNLV), 77–97 (FLNF…LEMI), 110–130 (GIFL…SFMV), 140–160 (VVYG…LAGI), and 176–196 (LGIT…FSGV).

The protein belongs to the NqrDE/RnfAE family. In terms of assembly, composed of six subunits; NqrA, NqrB, NqrC, NqrD, NqrE and NqrF.

The protein localises to the cell inner membrane. It carries out the reaction a ubiquinone + n Na(+)(in) + NADH + H(+) = a ubiquinol + n Na(+)(out) + NAD(+). NQR complex catalyzes the reduction of ubiquinone-1 to ubiquinol by two successive reactions, coupled with the transport of Na(+) ions from the cytoplasm to the periplasm. NqrA to NqrE are probably involved in the second step, the conversion of ubisemiquinone to ubiquinol. This Vibrio vulnificus (strain CMCP6) protein is Na(+)-translocating NADH-quinone reductase subunit E.